The primary structure comprises 225 residues: Orotate phosphoribosyltransferase (225 aa).

5-phospho-alpha-D-ribose 1-diphosphate-binding positions include Lys26, 73 to 74 (YK), Arg100, Lys101, Lys104, His106, and 127 to 135 (EDVTTAGTS). 2 residues coordinate orotate: Thr131 and Arg160.

This sequence belongs to the purine/pyrimidine phosphoribosyltransferase family. PyrE subfamily. Homodimer. Mg(2+) is required as a cofactor.

The enzyme catalyses orotidine 5'-phosphate + diphosphate = orotate + 5-phospho-alpha-D-ribose 1-diphosphate. The protein operates within pyrimidine metabolism; UMP biosynthesis via de novo pathway; UMP from orotate: step 1/2. Its function is as follows. Catalyzes the transfer of a ribosyl phosphate group from 5-phosphoribose 1-diphosphate to orotate, leading to the formation of orotidine monophosphate (OMP). The protein is Orotate phosphoribosyltransferase of Lachnoclostridium phytofermentans (strain ATCC 700394 / DSM 18823 / ISDg) (Clostridium phytofermentans).